Reading from the N-terminus, the 119-residue chain is Large ribosomal subunit protein bL20c (119 aa).

The protein belongs to the bacterial ribosomal protein bL20 family.

The protein localises to the plastid. It localises to the chloroplast. Functionally, binds directly to 23S ribosomal RNA and is necessary for the in vitro assembly process of the 50S ribosomal subunit. It is not involved in the protein synthesizing functions of that subunit. The polypeptide is Large ribosomal subunit protein bL20c (rpl20) (Zea mays (Maize)).